The sequence spans 278 residues: Embryonic polyadenylate-binding protein 2 (278 aa).

Disordered stretches follow at residues V21–G66 and E101–E128. The segment covering E35 to E50 has biased composition (basic and acidic residues). A compositionally biased stretch (acidic residues) spans K51 to G63. The 78-residue stretch at R147–T224 folds into the RRM domain. The disordered stretch occupies residues P227 to Y278.

As to expression, expressed in various adult tissues.

Its subcellular location is the cytoplasm. Binds the poly(A) tail of mRNA. This is Embryonic polyadenylate-binding protein 2 (PABPN1L) from Homo sapiens (Human).